The sequence spans 261 residues: Phosphate import ATP-binding protein PstB (261 aa).

Residues leucine 15–isoleucine 256 form the ABC transporter domain. Glycine 47–serine 54 contributes to the ATP binding site.

This sequence belongs to the ABC transporter superfamily. Phosphate importer (TC 3.A.1.7) family. In terms of assembly, the complex is composed of two ATP-binding proteins (PstB), two transmembrane proteins (PstC and PstA) and a solute-binding protein (PstS).

The protein localises to the cell inner membrane. It catalyses the reaction phosphate(out) + ATP + H2O = ADP + 2 phosphate(in) + H(+). Its function is as follows. Part of the ABC transporter complex PstSACB involved in phosphate import. Responsible for energy coupling to the transport system. The polypeptide is Phosphate import ATP-binding protein PstB (Burkholderia sp).